Here is a 277-residue protein sequence, read N- to C-terminus: Putative envelope-preserving system protein Rv2742c (277 aa).

A compositionally biased stretch (basic and acidic residues) spans 31 to 54; sequence RDENRQRHAQVDVQRRRDQPERGQ. Disordered stretches follow at residues 31-70, 113-133, and 180-210; these read RDEN…PDGR, QGSP…RLGR, and RQGS…HTAD. Residues 116-133 are compositionally biased toward basic residues; that stretch reads PRRRERRRGQTAHQRLGR.

In terms of assembly, interacts with Rv2743c.

In terms of biological role, involved in preservation of envelope integrity and tolerance to surface stress. Reverses the inhibitory effect of PspA on ClgR activity. Facilitates intracellular growth of M.tuberculosis. The polypeptide is Putative envelope-preserving system protein Rv2742c (Mycobacterium tuberculosis (strain ATCC 25618 / H37Rv)).